A 92-amino-acid chain; its full sequence is Small nuclear ribonucleoprotein E (92 aa).

Residues 18–92 (INLIFRYLQN…NITLLQSVSN (75 aa)) form the Sm domain.

This sequence belongs to the snRNP Sm proteins family. In terms of assembly, core component of the spliceosomal U1, U2, U4 and U5 small nuclear ribonucleoproteins (snRNPs), the building blocks of the spliceosome. Most spliceosomal snRNPs contain a common set of Sm proteins, SNRPB, SNRPD1, SNRPD2, SNRPD3, SNRPE, SNRPF and SNRPG that assemble in a heptameric protein ring on the Sm site of the small nuclear RNA to form the core snRNP. Component of the U1 snRNP. The U1 snRNP is composed of the U1 snRNA and the 7 core Sm proteins SNRPB, SNRPD1, SNRPD2, SNRPD3, SNRPE, SNRPF and SNRPG, and at least three U1 snRNP-specific proteins SNRNP70/U1-70K, SNRPA/U1-A and SNRPC/U1-C. Component of the U4/U6-U5 tri-snRNP complex composed of the U4, U6 and U5 snRNAs and at least PRPF3, PRPF4, PRPF6, PRPF8, PRPF31, SNRNP200, TXNL4A, SNRNP40, SNRPB, SNRPD1, SNRPD2, SNRPD3, SNRPE, SNRPF, SNRPG, DDX23, CD2BP2, PPIH, SNU13, EFTUD2, SART1 and USP39, plus LSM2, LSM3, LSM4, LSM5, LSM6, LSM7 and LSM8. Component of the U7 snRNP complex, or U7 Sm protein core complex, that is composed of the U7 snRNA and at least LSM10, LSM11, SNRPB, SNRPD3, SNRPE, SNRPF and SNRPG; the complex does not contain SNRPD1 and SNRPD2. Component of the minor spliceosome, which splices U12-type introns. Part of the SMN-Sm complex that contains SMN1, GEMIN2/SIP1, DDX20/GEMIN3, GEMIN4, GEMIN5, GEMIN6, GEMIN7, GEMIN8, STRAP/UNRIP and the Sm proteins SNRPB, SNRPD1, SNRPD2, SNRPD3, SNRPE, SNRPF and SNRPG; catalyzes core snRNPs assembly. Forms a 6S pICln-Sm complex composed of CLNS1A/pICln, SNRPD1, SNRPD2, SNRPE, SNRPF and SNRPG; ring-like structure where CLNS1A/pICln mimics additional Sm proteins and which is unable to assemble into the core snRNP. Interacts with SMN1; the interaction is direct. Interacts with GEMIN2 (via N-terminus); the interaction is direct. Interacts with SNRPF; the interaction is direct. Interacts with SNRPG; the interaction is direct.

It is found in the cytoplasm. The protein resides in the cytosol. It localises to the nucleus. Plays a role in pre-mRNA splicing as a core component of the spliceosomal U1, U2, U4 and U5 small nuclear ribonucleoproteins (snRNPs), the building blocks of the spliceosome. Component of both the pre-catalytic spliceosome B complex and activated spliceosome C complexes. As a component of the minor spliceosome, involved in the splicing of U12-type introns in pre-mRNAs. As part of the U7 snRNP it is involved in histone 3'-end processing. The chain is Small nuclear ribonucleoprotein E (SNRPE) from Sus scrofa (Pig).